Consider the following 546-residue polypeptide: Elongator complex protein 3 (546 aa).

Positions 81-371 (RTASGIAVVA…YRVQRDIPMP (291 aa)) constitute a Radical SAM core domain. [4Fe-4S] cluster-binding residues include cysteine 98, cysteine 108, and cysteine 111. Acetyl-CoA-binding positions include lysine 163, 473–476 (ELHV), 496–498 (FGM), and tyrosine 529. In terms of domain architecture, N-acetyltransferase spans 395 to 546 (TQCRDVRTRE…EGPYMVKRLQ (152 aa)).

The protein belongs to the ELP3 family. Component of the elongator complex. Requires [4Fe-4S] cluster as cofactor.

It is found in the cytoplasm. Its subcellular location is the nucleus. It carries out the reaction uridine(34) in tRNA + acetyl-CoA + S-adenosyl-L-methionine + H2O = 5-(carboxymethyl)uridine(34) in tRNA + 5'-deoxyadenosine + L-methionine + CoA + 2 H(+). It functions in the pathway tRNA modification; 5-methoxycarbonylmethyl-2-thiouridine-tRNA biosynthesis. Its function is as follows. Catalytic tRNA acetyltransferase subunit of the elongator complex which is required for multiple tRNA modifications, including mcm5U (5-methoxycarbonylmethyl uridine), mcm5s2U (5-methoxycarbonylmethyl-2-thiouridine), and ncm5U (5-carbamoylmethyl uridine). In the elongator complex, acts as a tRNA uridine(34) acetyltransferase by mediating formation of carboxymethyluridine in the wobble base at position 34 in tRNAs. This chain is Elongator complex protein 3, found in Gallus gallus (Chicken).